A 188-amino-acid chain; its full sequence is dCTP deaminase (188 aa).

Residues 111–116, 135–137, glutamine 156, tyrosine 170, and glutamine 180 each bind dCTP; these read KSTYAR and TLE. Glutamate 137 acts as the Proton donor/acceptor in catalysis.

This sequence belongs to the dCTP deaminase family. In terms of assembly, homotrimer.

The catalysed reaction is dCTP + H2O + H(+) = dUTP + NH4(+). The protein operates within pyrimidine metabolism; dUMP biosynthesis; dUMP from dCTP (dUTP route): step 1/2. Catalyzes the deamination of dCTP to dUTP. The chain is dCTP deaminase from Ectopseudomonas mendocina (strain ymp) (Pseudomonas mendocina).